Consider the following 400-residue polypeptide: Double C2-like domain-containing protein alpha (400 aa).

An interaction with UNC13D and DYNLT1 region spans residues 1-89 (MRGRRGDRMT…DSYDSDDATA (89 aa)). C2 domains are found at residues 89–211 (ALGT…HFNI) and 251–384 (ERGR…ERWH). Ca(2+)-binding residues include aspartate 120, aspartate 126, aspartate 181, aspartate 183, aspartate 282, aspartate 288, aspartate 342, aspartate 344, and aspartate 350. Residues 215 to 400 (RQVPLASPSS…PPAAGALSSA (186 aa)) are interaction with UNC13D.

Interacts (via N-terminus) with UNC13A. Interacts with cytoplasmic dynein light chain DYNLT1. Interacts with UNC13D. Ca(2+) serves as cofactor. As to expression, predominantly expressed in brain. Also expressed in testis.

It localises to the lysosome. The protein resides in the cytoplasmic vesicle. It is found in the secretory vesicle. The protein localises to the synaptic vesicle membrane. Its subcellular location is the synapse. It localises to the synaptosome. Calcium sensor which most probably regulates fusion of vesicles with membranes. Binds calcium and phospholipids. May be involved in calcium dependent neurotransmitter release through the interaction with UNC13A. May be involved in calcium-dependent spontaneous release of neurotransmitter in absence of action potentials in neuronal cells. Regulates Ca(2+)-dependent secretory lysosome exocytosis in mast cells. The protein is Double C2-like domain-containing protein alpha (DOC2A) of Homo sapiens (Human).